The chain runs to 203 residues: Ras-related protein RABD2a (203 aa).

GTP is bound by residues 15–23, 33–40, 63–67, 121–124, and 151–153; these read GDSGVGKSC, YVESYIST, DTAGQ, NKSD, and SAK. The Effector region signature appears at 37 to 45; the sequence is YISTIGVDF. The disordered stretch occupies residues 176–203; the sequence is QPAGNNARPPTVQIRGQPVAQKNGCCST. Residues Cys-200 and Cys-201 are each lipidated (S-geranylgeranyl cysteine).

This sequence belongs to the small GTPase superfamily. Rab family. Does not interact with GC5.

Its subcellular location is the golgi apparatus. It localises to the trans-Golgi network membrane. It is found in the golgi apparatus membrane. Its function is as follows. Protein transport. Regulator of membrane traffic from the Golgi apparatus towards the endoplasmic reticulum (ER). The polypeptide is Ras-related protein RABD2a (RABD2A) (Arabidopsis thaliana (Mouse-ear cress)).